A 586-amino-acid polypeptide reads, in one-letter code: Protein BONZAI 2 (586 aa).

Glycine 2 carries the N-myristoyl glycine lipid modification. C2 domains follow at residues 25–164 (SAAT…ALEL) and 176–303 (PQHN…NLAL). Ca(2+)-binding residues include aspartate 62, aspartate 68, aspartate 121, and aspartate 123. The VWFA domain occupies 344–563 (NFMVAIDFTA…SVVEALLAEL (220 aa)).

This sequence belongs to the copine family. Interacts with BAP1 and BAP2. Ca(2+) is required as a cofactor. Expressed in roots, leaves and stems. Expressed in young growing tissues.

The protein resides in the cell membrane. In terms of biological role, negative regulator of cell death and defense responses. May repress a number of R genes and may have effects in promoting growth and development. May function in membrane trafficking and in fusion of vesicles with plasma membrane. The sequence is that of Protein BONZAI 2 (BON2) from Arabidopsis thaliana (Mouse-ear cress).